Consider the following 84-residue polypeptide: Polcalcin Ole e 3 (84 aa).

2 consecutive EF-hand domains span residues 6-40 (QEVA…TLGS) and 41-76 (VTPE…NRGL). Asp19, Asn21, Asp23, Lys25, Glu30, Asp54, Asp56, Asp58, and Glu65 together coordinate Ca(2+).

As to expression, expressed exclusively in mature pollen.

The protein resides in the endomembrane system. This Olea europaea (Common olive) protein is Polcalcin Ole e 3 (OLE3).